A 111-amino-acid polypeptide reads, in one-letter code: Ig kappa chain V-III region MOPC 70 (111 aa).

Residues 1–23 (DIVLTQSPASLAVSLGQRATISC) are framework-1. Cys23 and Cys92 are joined by a disulfide. The complementarity-determining-1 stretch occupies residues 24-38 (RASESVDNSGISFMN). Residues 39–53 (WFQQKPGQPPKLLIY) form a framework-2 region. Residues 54-60 (AASNQGS) are complementarity-determining-2. Residues 61–92 (GVPARFSGSGSGTDFSLNIHPMEEDDTAMYFC) are framework-3. The tract at residues 93 to 101 (QQSKEVPWT) is complementarity-determining-3. The framework-4 stretch occupies residues 102-111 (FGGGTKLEIK).

The chain is Ig kappa chain V-III region MOPC 70 from Mus musculus (Mouse).